The chain runs to 1829 residues: Iron-regulated protein FrpC (1829 aa).

Hemolysin-type calcium-binding repeat units follow at residues 869 to 886 (FGHNKNVSLYGNDGNDTL), 887 to 904 (IGGAGNDYLEGGSGSDTY), 1015 to 1032 (NGGLGDDYLYGADGDDLL), 1033 to 1050 (NGDAGNDSIYSGNGNDTL), 1051 to 1068 (DGGEGNDALYGYNGNDAL), 1069 to 1086 (NGGEGNDHLNGEDGNDTL), 1087 to 1104 (IGGAGNDYLEGGSGSDTY), 1215 to 1232 (NGGLGDDYLYGADGDDLL), 1233 to 1250 (NGDAGNDSIYSGNGNDTL), 1251 to 1268 (DGGEGNDALYGYNGNDAL), 1269 to 1286 (NGGEGNDHLNGEDGNDTL), 1287 to 1304 (IGGAGNDYLEGGSGSDTY), 1415 to 1432 (NGGLGDDYLYGADGDDLL), 1433 to 1450 (NGDAGNDSIYSGNGNDTL), 1451 to 1468 (NGGEGNDALYGYNGNDAL), 1469 to 1486 (NGGEGNDHLNGEDGNDTL), 1487 to 1504 (IGGAGNDYLEGGSGSDTY), 1615 to 1632 (NGGLGDDYLYGADGDDLL), 1633 to 1650 (NGDAGNDSIYSGNGNDTL), 1651 to 1668 (DGGEGNDALYGYNGNDAL), 1669 to 1686 (NGGEGNDHLNGEDGNDTL), and 1687 to 1704 (IGGAGNDYLEGGSGSDTY). The interval 1671–1690 (GEGNDHLNGEDGNDTLIGGA) is disordered.

It belongs to the RTX prokaryotic toxin (TC 1.C.11) family.

The protein resides in the cell outer membrane. Its subcellular location is the secreted. In terms of biological role, may participate in the pathogenesis of meningococcal disease. The sequence is that of Iron-regulated protein FrpC (frpC) from Neisseria meningitidis serogroup B (strain ATCC BAA-335 / MC58).